The following is a 158-amino-acid chain: Small ribosomal subunit protein uS17 (158 aa).

An N-acetylalanine modification is found at A2. The residue at position 22 (R22) is a Citrulline. 3 positions are modified to N6-acetyllysine: K38, K45, and K58. C60 carries S-palmitoyl cysteine lipidation. S67 carries the phosphoserine modification. R69 bears the Omega-N-methylarginine mark. Phosphoserine is present on S110.

The protein belongs to the universal ribosomal protein uS17 family. Component of the small ribosomal subunit. Part of the small subunit (SSU) processome, composed of more than 70 proteins and the RNA chaperone small nucleolar RNA (snoRNA) U3. In terms of processing, citrullinated by PADI4.

It is found in the cytoplasm. It localises to the nucleus. The protein localises to the nucleolus. Component of the small ribosomal subunit. The ribosome is a large ribonucleoprotein complex responsible for the synthesis of proteins in the cell. Part of the small subunit (SSU) processome, first precursor of the small eukaryotic ribosomal subunit. During the assembly of the SSU processome in the nucleolus, many ribosome biogenesis factors, an RNA chaperone and ribosomal proteins associate with the nascent pre-rRNA and work in concert to generate RNA folding, modifications, rearrangements and cleavage as well as targeted degradation of pre-ribosomal RNA by the RNA exosome. The polypeptide is Small ribosomal subunit protein uS17 (Rps11) (Mus musculus (Mouse)).